Reading from the N-terminus, the 131-residue chain is Profilin-3 (131 aa).

An intrachain disulfide couples cysteine 13 to cysteine 115. Positions 81-97 match the Involved in PIP2 interaction motif; it reads AVIRGKKGAGGITIKKT. Threonine 111 is modified (phosphothreonine).

It belongs to the profilin family. In terms of assembly, occurs in many kinds of cells as a complex with monomeric actin in a 1:1 ratio. Post-translationally, phosphorylated by MAP kinases.

It localises to the cytoplasm. The protein resides in the cytoskeleton. In terms of biological role, binds to actin and affects the structure of the cytoskeleton. At high concentrations, profilin prevents the polymerization of actin, whereas it enhances it at low concentrations. By binding to PIP2, it inhibits the formation of IP3 and DG. The polypeptide is Profilin-3 (PRO3) (Phleum pratense (Common timothy)).